The primary structure comprises 684 residues: 1,4-alpha-glucan-branching enzyme (684 aa).

Positions 88 and 123 each coordinate (1,4-alpha-D-glucosyl)n. The active-site Nucleophile is the Asp340. Catalysis depends on Glu395, which acts as the Proton donor.

This sequence belongs to the glycosyl hydrolase 13 family. GlgB subfamily.

It localises to the cytoplasm. The catalysed reaction is Transfers a segment of a (1-&gt;4)-alpha-D-glucan chain to a primary hydroxy group in a similar glucan chain.. The protein operates within glycan biosynthesis; glycogen biosynthesis. Functionally, glycogen-branching enzyme participates in the glycogen biosynthetic process along with glycogenin and glycogen synthase. Generates alpha-1,6-glucosidic branches from alpha-1,4-linked glucose chains, to increase solubility of the glycogen polymer. In Emericella nidulans (strain FGSC A4 / ATCC 38163 / CBS 112.46 / NRRL 194 / M139) (Aspergillus nidulans), this protein is 1,4-alpha-glucan-branching enzyme (be1).